We begin with the raw amino-acid sequence, 185 residues long: Iodate reductase subunit IdrB (185 aa).

The segment at residues methionine 1–alanine 46 is a signal peptide (tat-type signal). The region spanning glycine 69–alanine 168 is the Rieske domain. Residues cysteine 109, histidine 111, cysteine 130, and histidine 133 each coordinate [2Fe-2S] cluster.

It belongs to the AOX family. In terms of assembly, the iodate reductase (Idr) complex is composed of a molybdopterin-dependent iodate reductase (IdrA and IdrB subunits) and two associated peroxidases (IdrP1 and IdrP2). It depends on [2Fe-2S] cluster as a cofactor. Predicted to be exported by the Tat system. The position of the signal peptide cleavage has not been experimentally proven.

It is found in the periplasm. Its function is as follows. Involved in iodate respiration. May accept electrons from cytochrome c551, and catalyze the reduction of iodate (IO(3)(-)) to produce the chemically unstable intermediate hypoiodous acid (HIO). This intermediate then undergoes abiotic disproportionation to yield two molecules of iodide (I(-)) and one molecule of iodate. The resultant iodate subsequently cycles back into the reductive pathway. The initial reduction of iodate may inadvertently produce low levels of incidental toxic H(2)O(2), which is detoxified by IdrP1 and IdrP2. The protein is Iodate reductase subunit IdrB of Denitromonas iodatirespirans.